Here is a 291-residue protein sequence, read N- to C-terminus: MNSFAVFGNPIRHSKSAEIYALFAHEIGISKEYNLKLAVQDNFNYLLHNFFKLGGLGANITSPFKENAYFLCNQLTERAEKARSVNTIKKLKNGTLLGDNTDGIGFISDLKRLNWLDNNNQIISNDAPIPMVTNILLIGAGGAAKGIVPILLTTITTCHINIVNRTFSRAQELTSYYQEIGYKNISCLPLYKLRYDTNKYSLIINATTSNIHNTIPKIPYFLITPDTKCYDLFYTKQDTLFITWCKKNGANYCADGLGMLVGQAAHSFLLWHNTFPTINPVIDHLRSAFYM.

Shikimate contacts are provided by residues 14 to 16 (SKS) and T61. K65 functions as the Proton acceptor in the catalytic mechanism. Residue E77 participates in NADP(+) binding. Residues N86 and D102 each coordinate shikimate. Residues 139 to 143 (GAGGA), 164 to 169 (NRTFSR), and L232 each bind NADP(+). Y234 is a shikimate binding site. G256 contacts NADP(+).

The protein belongs to the shikimate dehydrogenase family. In terms of assembly, homodimer.

The catalysed reaction is shikimate + NADP(+) = 3-dehydroshikimate + NADPH + H(+). The protein operates within metabolic intermediate biosynthesis; chorismate biosynthesis; chorismate from D-erythrose 4-phosphate and phosphoenolpyruvate: step 4/7. In terms of biological role, involved in the biosynthesis of the chorismate, which leads to the biosynthesis of aromatic amino acids. Catalyzes the reversible NADPH linked reduction of 3-dehydroshikimate (DHSA) to yield shikimate (SA). This Blochmanniella pennsylvanica (strain BPEN) protein is Shikimate dehydrogenase (NADP(+)).